The chain runs to 427 residues: Acetylornithine aminotransferase, mitochondrial (427 aa).

N6-(pyridoxal phosphate)lysine is present on Lys279.

This sequence belongs to the class-III pyridoxal-phosphate-dependent aminotransferase family. Pyridoxal 5'-phosphate is required as a cofactor.

The protein resides in the mitochondrion matrix. It catalyses the reaction N(2)-acetyl-L-ornithine + 2-oxoglutarate = N-acetyl-L-glutamate 5-semialdehyde + L-glutamate. Its pathway is amino-acid biosynthesis; L-arginine biosynthesis; N(2)-acetyl-L-ornithine from L-glutamate: step 4/4. This is Acetylornithine aminotransferase, mitochondrial (ARG8) from Candida glabrata (strain ATCC 2001 / BCRC 20586 / JCM 3761 / NBRC 0622 / NRRL Y-65 / CBS 138) (Yeast).